We begin with the raw amino-acid sequence, 87 residues long: Toxin CngtIII (87 aa).

A signal peptide spans 1 to 19; sequence MNSLLMITACLVLFGTVWA. In terms of domain architecture, LCN-type CS-alpha/beta spans 20–85; sequence KEGYLVNKST…TYPLPNKTCS (66 aa). Cystine bridges form between C31-C84, C35-C60, C44-C65, and C48-C67.

This sequence belongs to the long (4 C-C) scorpion toxin superfamily. Sodium channel inhibitor family. Beta subfamily. In terms of tissue distribution, expressed by the venom gland.

The protein resides in the secreted. Beta toxins bind voltage-independently at site-4 of sodium channels (Nav) and shift the voltage of activation toward more negative potentials thereby affecting sodium channel activation and promoting spontaneous and repetitive firing. The sequence is that of Toxin CngtIII from Centruroides noxius (Mexican scorpion).